Consider the following 151-residue polypeptide: Large ribosomal subunit protein bL9 (151 aa).

The protein belongs to the bacterial ribosomal protein bL9 family.

Functionally, binds to the 23S rRNA. In Rhodococcus jostii (strain RHA1), this protein is Large ribosomal subunit protein bL9.